Consider the following 58-residue polypeptide: Probable U-exon protein (58 aa).

The chain is Probable U-exon protein from Snake adenovirus serotype 1 (SnAdV-1).